The following is a 1121-amino-acid chain: Transcription factor CSR2 (1121 aa).

Residues serine 23, serine 46, and serine 127 each carry the phosphoserine modification. Disordered stretches follow at residues 273–342 (PLHT…RSLP), 513–532 (HTQLVASRPRSSSISSPQKL), 579–600 (LKRNNSNGRSDNNGASSSGLAM), and 837–860 (IPQDKNHNEVNDTNGNSNTSLQTS). Residues 276–310 (TQRTSPSNTARTGNAMDTSNSDRASPASNNNTTDA) show a composition bias toward polar residues. Low complexity-rich tracts occupy residues 318 to 329 (NNNPMNNNNSPA), 519 to 529 (SRPRSSSISSP), and 582 to 597 (NNSNGRSDNNGASSSG). Serine 327 is subject to Phosphoserine. Residues 837–846 (IPQDKNHNEV) show a composition bias toward basic and acidic residues. Lysine 841 participates in a covalent cross-link: Glycyl lysine isopeptide (Lys-Gly) (interchain with G-Cter in ubiquitin). Residues 847 to 860 (NDTNGNSNTSLQTS) show a composition bias toward polar residues. At serine 987 the chain carries Phosphoserine. The segment covering 999–1009 (KTTAVSDSSNG) has biased composition (polar residues). 2 disordered regions span residues 999–1022 (KTTAVSDSSNGAPIRDQQEQQARP) and 1075–1121 (TPRY…EISS). The segment covering 1084 to 1093 (TNTDYNYNDN) has biased composition (low complexity).

The protein belongs to the CSR2 family. Phosphorylated by CDC28.

Its subcellular location is the cytoplasm. The protein resides in the nucleus. Functionally, transcription factor involved in the regulation of fermentation and aerobic oxidation. Acts as a repressor of CYC1, which is involved in electron flow through the mitochondria under aerobic condition. Required for pseudohyphal formation upon nitrogen starvation. May be involved in viability at stationary phase and aging. This chain is Transcription factor CSR2 (CSR2), found in Saccharomyces cerevisiae (strain ATCC 204508 / S288c) (Baker's yeast).